The following is a 375-amino-acid chain: Putative actin-26 (375 aa).

This sequence belongs to the actin family.

It localises to the cytoplasm. The protein localises to the cytoskeleton. It catalyses the reaction ATP + H2O = ADP + phosphate + H(+). In terms of biological role, actins are highly conserved proteins that are involved in various types of cell motility and are ubiquitously expressed in all eukaryotic cells. Multiple isoforms are involved in various cellular functions such as cytoskeleton structure, cell mobility, chromosome movement and muscle contraction. This Dictyostelium discoideum (Social amoeba) protein is Putative actin-26 (act26).